The primary structure comprises 323 residues: Acetyl esterase (323 aa).

Positions 91–93 (HGG) match the Involved in the stabilization of the negatively charged intermediate by the formation of the oxyanion hole motif. Residues Ser-165, Asp-262, and His-292 contribute to the active site.

This sequence belongs to the 'GDXG' lipolytic enzyme family. In terms of assembly, homodimer. Interacts with MalT and MelA.

The protein resides in the cytoplasm. Functionally, displays esterase activity towards short chain fatty esters (acyl chain length of up to 8 carbons). Able to hydrolyze triacetylglycerol (triacetin) and tributyrylglycerol (tributyrin), but not trioleylglycerol (triolein) or cholesterol oleate. Negatively regulates MalT activity by antagonizing maltotriose binding. Inhibits MelA galactosidase activity. In Salmonella choleraesuis (strain SC-B67), this protein is Acetyl esterase.